Here is a 341-residue protein sequence, read N- to C-terminus: LRP2-binding protein (341 aa).

One copy of the TPR repeat lies at 56–89; that stretch reads VQANFLLGQLFFEEGWYEDALLQFEKVKDEDNQA. Sel1-like repeat units follow at residues 90-122, 130-165, 170-203, 204-239, 240-271, and 291-326; these read LYQA…TSDC, YAAA…DNGN, LKAQ…GNGS, LESQ…ERGN, VYAQ…SHDN, and AIAT…QLDA.

It localises to the cytoplasm. Its function is as follows. May act as an adapter that regulates LRP2 function. This chain is LRP2-binding protein (lrp2bp), found in Xenopus laevis (African clawed frog).